Consider the following 332-residue polypeptide: Tetraacyldisaccharide 4'-kinase (332 aa).

60 to 67 (TVGGTGKT) lines the ATP pocket.

This sequence belongs to the LpxK family.

The enzyme catalyses a lipid A disaccharide + ATP = a lipid IVA + ADP + H(+). It participates in glycolipid biosynthesis; lipid IV(A) biosynthesis; lipid IV(A) from (3R)-3-hydroxytetradecanoyl-[acyl-carrier-protein] and UDP-N-acetyl-alpha-D-glucosamine: step 6/6. In terms of biological role, transfers the gamma-phosphate of ATP to the 4'-position of a tetraacyldisaccharide 1-phosphate intermediate (termed DS-1-P) to form tetraacyldisaccharide 1,4'-bis-phosphate (lipid IVA). This Pseudomonas paraeruginosa (strain DSM 24068 / PA7) (Pseudomonas aeruginosa (strain PA7)) protein is Tetraacyldisaccharide 4'-kinase.